A 92-amino-acid chain; its full sequence is Endoribonuclease HigB (92 aa).

His-92 is an active-site residue.

As to quaternary structure, forms a complex with the antitoxin HigA which inhibits the mRNA interferase activity. The heterodimer dimerizes to form a HigB-(HigA)2-HigB tetramer that is able to bind to the DNA.

Its function is as follows. Toxic component of a type II toxin-antitoxin (TA) system. A ribosome-associated translation-dependent mRNA interferase. Inhibits translation by sequence-specific cleavage of mRNA. Prefers either in-frame or out-of-frame 5'-AAA-3' codons (lysine). Also cleaves the first three AAAs of stretches of four or more A sequences. 20% of codons containing AA are cleaved and occassionally cuts even at a single A. The sequence is that of Endoribonuclease HigB from Proteus vulgaris.